The chain runs to 595 residues: Pectinesterase 5 (595 aa).

An N-terminal signal peptide occupies residues 1 to 24 (MIGKVVVSVASILLIVGVAIGVVA). 2 N-linked (GlcNAc...) asparagine glycosylation sites follow: asparagine 86 and asparagine 206. Residues 215–239 (SDKGAAPVNKGTPPVADDSPVADPD) are disordered. Positions 227–239 (PPVADDSPVADPD) are enriched in low complexity. The RRLL cleavage motif signature appears at 243–246 (RRLL). Residues 263-266 (RKLM) carry the RKLM cleavage motif motif. An N-linked (GlcNAc...) asparagine glycan is attached at asparagine 349. Threonine 360 and glutamine 390 together coordinate substrate. The active-site Proton donor is aspartate 413. The active-site Nucleophile is the aspartate 434. Positions 503 and 505 each coordinate substrate.

This sequence in the N-terminal section; belongs to the PMEI family. In the C-terminal section; belongs to the pectinesterase family. Interacts with SBT6.1. In terms of tissue distribution, expressed in pollen grains and pollen tubes.

The protein resides in the cell membrane. Its subcellular location is the secreted. It is found in the cell wall. The protein localises to the golgi apparatus membrane. The catalysed reaction is [(1-&gt;4)-alpha-D-galacturonosyl methyl ester](n) + n H2O = [(1-&gt;4)-alpha-D-galacturonosyl](n) + n methanol + n H(+). It functions in the pathway glycan metabolism; pectin degradation; 2-dehydro-3-deoxy-D-gluconate from pectin: step 1/5. Acts in the modification of cell walls via demethylesterification of cell wall pectin. Plays an important role in growth of pollen tubes in female floral tissues, possibly via enhancing the interaction between the pollen tube and female floral tissues by modification of the cell walls. May be regulated by MYB80 during anther development and play a role in tapetum and pollen development. The chain is Pectinesterase 5 (PME5) from Arabidopsis thaliana (Mouse-ear cress).